We begin with the raw amino-acid sequence, 281 residues long: Small ribosomal subunit protein uS2 (281 aa).

Residues 233-281 (NKAEGEAAEQPMAAWEKELLTNEAPAEASAEAAAPAAAEGETAEAPKAE) form a disordered region. Positions 255–275 (EAPAEASAEAAAPAAAEGETA) are enriched in low complexity.

It belongs to the universal ribosomal protein uS2 family.

The polypeptide is Small ribosomal subunit protein uS2 (Bifidobacterium longum (strain DJO10A)).